A 977-amino-acid chain; its full sequence is MKGLSGSRSHHHGVTCDSACDSLSHHSDRKPYLLSPVEHHPADHPYYTQRNSFQAECVGPFSDPLASSTFPRRHYTSQQELKDECALVPRTLATKANRIPANLLDQFERQLPLSRDGYHTLQYKRTAVEHRSDSPGRIRHLVHSVQKLFTKSHSLEGPSKGSVNGGKASPDEAQAARYGKRSKSKERRAEPKARPSTSPGWWSSDDNLDGDMCIYHAPSGVMTMGRCPDRSASQYFLEAYNTISEQAVKASRSNNDVKCSTCANLPVSLDTPLLKKSAWSSTLTVSRAREVYQKASVNMDQAMVKSESCQQERSCQYLQVPQDEWTGYTPRGKDDEIPCRRMRSGSYIKAMGDEDSGDSDTSPKPSPKVAARRESYLKATQPSLTELTTLKISNEHSPKLQIRSHSYLRAVSEVSINRSLDSLDPAGLLTSPKFRSRNESYMRAMSTISQVSEMEVNGQFESVCESVFSELESQAVEALDLPMPGCFRMRSHSYVRAIEKGCSQDDECVSLRSSSPPRTTTTVRTIQSSTVSSCITTYKKTPPPVPPRTTTKPFISITAQSSTESAQDAYMDGQGQRGDIISQSGLSNSTESLDSMKALTAAIEAANAQIHGPASQHMGNNTATVTTTTTIATVTTEDRKKDHFKKNRCLSIGIQVDDAEEPDKTGENKAPSKFQSVGVQVEEEKCFRRFTRSNSVTTAVQADLDFHDNLENSLESIEDNSCPGPMARQFSRDASTSTVSIQGSGNHYHACAADDDFDTDFDPSILPPPDPWIDSITEDPLEAVQRSVCHRDGHWFLKLLQAERDRMEGWCQQMEREERENNLPEDILGKIRTAVGSAQLLMAQKFYQFRELCEENLNPNAHPRPTSQDLAGFWDMLQLSIENISMKFDELHQLKANNWKQMDPLDKKERRAPPPVPKKPAKGPAPLIRERSLESSQRQEARKRLMAAKRAASVRQNSATESAESIEIYIPEAQTRL.

Disordered stretches follow at residues 150–203 (TKSH…GWWS) and 349–371 (KAMG…KVAA). Serine 169, serine 356, serine 359, serine 362, serine 366, serine 383, serine 412, serine 415, serine 419, serine 422, serine 431, serine 503, serine 510, and serine 562 each carry phosphoserine. Position 563 is a phosphothreonine (threonine 563). 2 positions are modified to phosphoserine: serine 565 and serine 589. Threonine 590 bears the Phosphothreonine mark. 2 positions are modified to phosphoserine: serine 592 and serine 595. 2 interaction with DYL2 regions span residues 650-661 (LSIGIQVDDAEE) and 672-683 (SKFQSVGVQVEE). Positions 899 to 965 (WKQMDPLDKK…QNSATESAES (67 aa)) are disordered. Basic and acidic residues-rich tracts occupy residues 903 to 912 (DPLDKKERRA) and 928 to 943 (IRER…EARK). Serine 932 is subject to Phosphoserine. The segment covering 954 to 963 (VRQNSATESA) has biased composition (polar residues). Positions 975-977 (TRL) match the PDZ-binding motif.

It belongs to the SAPAP family. In terms of assembly, interacts with guanylate kinase-like domain of DLG1, DLG2, DLG3, DLG4 and AIP1. Interacts with the PDZ domain of SHANK1, SHANK2 and SHANK3. Found in a complex with DLG4 and SHANK1, SHANK2 or SHANK3. Found in a complex with DLG4 and BEGAIN. Interacts with DYL2 and LRFN1. Interacts with MPP2 (via the SH3-Guanylate kinase-like sub-module). Ubiquitinated by TRIM3; leading to proteasomal degradation. Expressed in brain.

It is found in the cell membrane. The protein resides in the postsynaptic density. The protein localises to the synapse. Its function is as follows. Part of the postsynaptic scaffold in neuronal cells. In Homo sapiens (Human), this protein is Disks large-associated protein 1 (DLGAP1).